The primary structure comprises 557 residues: MVLSDIEIANSVSMEPISKVADQLGIDKEALCLYGKYKAKINARQLVALKDKPDGKLILVTAISPTPAGEGKTTTSVGLVDALSAIGKKAVIALREPSLGPVFGVKGGAAGGGHAQVVPMEDINLHFTGDFHAIGVANNLLAALIDNHIHHGNSLGIDSRRITWKRVVDMNDRQLRHIVDGLQGKVNGVPREDGYDITVASEIMAILCLSENISDLKARLEKIIIGYNYQGEPVTAKDLKAGGALADLLKDAIHPNLVQTLEHTPALIHGGPFANIAHGCNSVLATKLALKYGDYAVTEAGFGADLGAEKFIDIKCRMSGLRPAAVVLVATIRALKMHGGVQKTDLATENVQAVVDGLPNLDKHLANIQDVYGLPVVVAINKFPLDTDAELQAVYDACNKRGVDVVISDVWANGGAGGRELAEKVVTLAEQDNQFRFVYEEDDSIETKLTKIVTKVYGGKGITLSPAAKRELADLERLGFGNYPICMAKTQYSFSDDAKTLGAPTDFTVTISNLKVSAGAGFIVALTGAIMTMPGLPKVPASETIDIDEEGNITGLF.

ATP is bound at residue 66 to 73; the sequence is TPAGEGKT.

The protein belongs to the formate--tetrahydrofolate ligase family.

It catalyses the reaction (6S)-5,6,7,8-tetrahydrofolate + formate + ATP = (6R)-10-formyltetrahydrofolate + ADP + phosphate. It functions in the pathway one-carbon metabolism; tetrahydrofolate interconversion. The polypeptide is Formate--tetrahydrofolate ligase 2 (Streptococcus pyogenes serotype M4 (strain MGAS10750)).